The sequence spans 550 residues: M-phase inducer phosphatase 1-B (550 aa).

2 disordered regions span residues 76–98 and 285–335; these read NLGDETAPLPTESPDRISSGKVE and SPSM…QRRG. The span at 290 to 310 shows a compositional bias: basic and acidic residues; sequence EKLDRPMLKRPVRPLDSETPV. The span at 322 to 335 shows a compositional bias: polar residues; the sequence is LQPQEENFQPQRRG. The Rhodanese domain maps to 401–508; it reads LVEKIFIIDC…FFPEYKELCE (108 aa). Residue C457 is part of the active site.

Belongs to the MPI phosphatase family.

The catalysed reaction is O-phospho-L-tyrosyl-[protein] + H2O = L-tyrosyl-[protein] + phosphate. Tyrosine protein phosphatase which functions as a dosage-dependent inducer of mitotic progression. Directly dephosphorylates CDK1 and stimulates its kinase activity. This is M-phase inducer phosphatase 1-B (cdc25-1-b) from Xenopus laevis (African clawed frog).